Here is a 163-residue protein sequence, read N- to C-terminus: Iron-sulfur cluster assembly protein 2 (163 aa).

The N-terminal 48 residues, 1–48 (MMMLRQTSRKAYLGLQASPLGLGRRLYHENVIDHFENPRNVGSFNRND), are a transit peptide targeting the mitochondrion.

It belongs to the NifU family. As to quaternary structure, component of the core Fe-S cluster (ISC) assembly machinery. Requires [2Fe-2S] cluster as cofactor. As to expression, mostly expressed in leaves, pollen and flowers.

The protein resides in the mitochondrion matrix. It functions in the pathway cofactor biosynthesis; iron-sulfur cluster biosynthesis. Scaffold protein for the de novo synthesis of iron-sulfur (Fe-S) clusters within mitochondria, which is required for maturation of both mitochondrial and cytoplasmic [2Fe-2S] and [4Fe-4S] proteins. First, a [2Fe-2S] cluster is transiently assembled on the scaffold protein ISCU (ISU1, ISU2 or ISU3). In a second step, the cluster is released from ISCU, transferred to a glutaredoxin, followed by the formation of mitochondrial [2Fe-2S] proteins, the synthesis of [4Fe-4S] clusters and their target-specific insertion into the recipient apoproteins. Cluster assembly on ISCU depends on the function of the cysteine desulfurase complex NFS1-ISD11, which serves as the sulfur donor for cluster synthesis, the iron-binding protein frataxin as the putative iron donor, and the electron transfer chain comprised of ferredoxin reductase and ferredoxin, which receive their electrons from NADH. The protein is Iron-sulfur cluster assembly protein 2 (ISU2) of Arabidopsis thaliana (Mouse-ear cress).